The following is a 1892-amino-acid chain: Kinesin-like protein KIN-12E (1892 aa).

The interval 1-28 (MAGHGAGGRRASTSRAAARRVEAETNEN) is disordered. The region spanning 64-401 (NVQVLIRIRP…LKFAQRAKLI (338 aa)) is the Kinesin motor domain. Residue 145-152 (GQTGSGKT) participates in ATP binding. Coiled coils occupy residues 406–438 (KVNE…QQNM), 486–526 (SLRR…TTVK), 1066–1139 (LFSN…LHEQ), 1303–1357 (KLLQ…LAEN), and 1396–1528 (ISET…SYQI). Residues 1633 to 1649 (LHESNSDTGHTKFEKPS) are compositionally biased toward basic and acidic residues. Residues 1633-1656 (LHESNSDTGHTKFEKPSGRTRGSG) are disordered. The stretch at 1780–1841 (MDQRKADLLE…LVGSNQAIAE (62 aa)) forms a coiled coil. Residues 1870-1892 (HARHEHSRLQAAKSSRTRRGSHQ) form a disordered region.

Belongs to the TRAFAC class myosin-kinesin ATPase superfamily. Kinesin family. KIN-12 subfamily.

This is Kinesin-like protein KIN-12E from Oryza sativa subsp. japonica (Rice).